A 377-amino-acid polypeptide reads, in one-letter code: Succinyl-diaminopimelate desuccinylase (377 aa).

Position 68 (histidine 68) interacts with Zn(2+). Aspartate 70 is a catalytic residue. Aspartate 101 contributes to the Zn(2+) binding site. The Proton acceptor role is filled by glutamate 135. Positions 136, 164, and 350 each coordinate Zn(2+).

The protein belongs to the peptidase M20A family. DapE subfamily. As to quaternary structure, homodimer. Zn(2+) is required as a cofactor. The cofactor is Co(2+).

The enzyme catalyses N-succinyl-(2S,6S)-2,6-diaminopimelate + H2O = (2S,6S)-2,6-diaminopimelate + succinate. It functions in the pathway amino-acid biosynthesis; L-lysine biosynthesis via DAP pathway; LL-2,6-diaminopimelate from (S)-tetrahydrodipicolinate (succinylase route): step 3/3. Functionally, catalyzes the hydrolysis of N-succinyl-L,L-diaminopimelic acid (SDAP), forming succinate and LL-2,6-diaminopimelate (DAP), an intermediate involved in the bacterial biosynthesis of lysine and meso-diaminopimelic acid, an essential component of bacterial cell walls. This chain is Succinyl-diaminopimelate desuccinylase, found in Acinetobacter baumannii (strain AB307-0294).